The primary structure comprises 116 residues: Peptidyl-tRNA hydrolase (116 aa).

It belongs to the PTH2 family.

It localises to the cytoplasm. It catalyses the reaction an N-acyl-L-alpha-aminoacyl-tRNA + H2O = an N-acyl-L-amino acid + a tRNA + H(+). Its function is as follows. The natural substrate for this enzyme may be peptidyl-tRNAs which drop off the ribosome during protein synthesis. The protein is Peptidyl-tRNA hydrolase of Methanopyrus kandleri (strain AV19 / DSM 6324 / JCM 9639 / NBRC 100938).